The chain runs to 342 residues: Cathepsin B-like cysteine proteinase 1 (342 aa).

Positions 1–18 are cleaved as a signal peptide; it reads MKYLVLALCTYLCSQTGA. Residues 19 to 86 constitute a propeptide, activation peptide; sequence DENAAQGIPL…VKEDPDPEVD (68 aa). Asn99 carries an N-linked (GlcNAc...) asparagine glycan. 6 disulfides stabilise this stretch: Cys100–Cys128, Cys111–Cys156, Cys147–Cys214, Cys148–Cys152, Cys185–Cys218, and Cys193–Cys205. Residue Cys114 is part of the active site. N-linked (GlcNAc...) asparagine glycosylation occurs at Asn138. N-linked (GlcNAc...) asparagine glycosylation is present at Asn198. His285 is an active-site residue. Asn296 carries an N-linked (GlcNAc...) asparagine glycan. The active site involves Asn305.

Belongs to the peptidase C1 family.

Functionally, expression of the protease correlates with blood-feeding and suggests a role for the protease in blood digestion. This Haemonchus contortus (Barber pole worm) protein is Cathepsin B-like cysteine proteinase 1 (AC-1).